Here is a 425-residue protein sequence, read N- to C-terminus: Formyl-CoA:oxalate CoA-transferase (425 aa).

Residues 17–18 (QS), arginine 38, 72–75 (LDTK), 96–98 (NFG), arginine 104, and 136–139 (KVYE) contribute to the CoA site. Aspartate 168 (nucleophile) is an active-site residue. A substrate-binding site is contributed by 247-249 (GGQ).

Belongs to the CoA-transferase III family. Frc subfamily. In terms of assembly, homodimer.

The catalysed reaction is formyl-CoA + oxalate = oxalyl-CoA + formate. It functions in the pathway metabolic intermediate degradation; oxalate degradation; CO(2) and formate from oxalate: step 1/2. Functionally, involved in the catabolism of oxalate and in the adapatation to low pH via the induction of the oxalate-dependent acid tolerance response (ATR). Catalyzes the transfer of the CoA moiety from formyl-CoA to oxalate. The polypeptide is Formyl-CoA:oxalate CoA-transferase (Rhodopseudomonas palustris (strain HaA2)).